Consider the following 78-residue polypeptide: MKRFAVQDHELVPEHILLTPEEAQQVLMQYGVEARHLPKIHVTDPVAKEIGAKVGDIIKIKRKSPTAKESIFYRLVID.

It belongs to the archaeal Rpo5/eukaryotic RPB5 RNA polymerase subunit family. In terms of assembly, part of the RNA polymerase complex.

The protein localises to the cytoplasm. The catalysed reaction is RNA(n) + a ribonucleoside 5'-triphosphate = RNA(n+1) + diphosphate. Functionally, DNA-dependent RNA polymerase (RNAP) catalyzes the transcription of DNA into RNA using the four ribonucleoside triphosphates as substrates. This chain is DNA-directed RNA polymerase subunit Rpo5, found in Methanothrix thermoacetophila (strain DSM 6194 / JCM 14653 / NBRC 101360 / PT) (Methanosaeta thermophila).